The primary structure comprises 458 residues: Translation initiation factor eIF2B subunit gamma (458 aa).

Position 291 is a phosphoserine (serine 291).

It belongs to the eIF-2B gamma/epsilon subunits family. As to quaternary structure, component of the translation initiation factor 2B (eIF2B) complex which is a heterodecamer of two sets of five different subunits: alpha, beta, gamma, delta and epsilon. Subunits alpha, beta and delta comprise a regulatory subcomplex and subunits epsilon and gamma comprise a catalytic subcomplex. Within the complex, the hexameric regulatory complex resides at the center, with the two heterodimeric catalytic subcomplexes bound on opposite sides.

The protein resides in the cytoplasm. It is found in the cytosol. In terms of biological role, acts as a component of the translation initiation factor 2B (eIF2B) complex, which catalyzes the exchange of GDP for GTP on the eukaryotic initiation factor 2 (eIF2) complex gamma subunit. Its guanine nucleotide exchange factor activity is repressed when bound to eIF2 complex phosphorylated on the alpha subunit, thereby limiting the amount of methionyl-initiator methionine tRNA available to the ribosome and consequently global translation is repressed. This chain is Translation initiation factor eIF2B subunit gamma (tif223), found in Schizosaccharomyces pombe (strain 972 / ATCC 24843) (Fission yeast).